We begin with the raw amino-acid sequence, 128 residues long: Myelin basic protein (128 aa).

2 disordered regions span residues 1–24 and 82–128; these read AGGA…EPAT and TDGQ…PARR. 2 stretches are compositionally biased toward basic and acidic residues: residues 11–23 and 96–107; these read GSRK…KEPA and KSREAYRGRKDG.

Belongs to the myelin basic protein family. In terms of processing, the N-terminus is blocked.

It is found in the myelin membrane. Its function is as follows. This protein may function to maintain proper structure of myelin. The protein is Myelin basic protein (MBP) of Carcharhinus obscurus (Dusky shark).